The primary structure comprises 341 residues: L-threonine 3-dehydrogenase (341 aa).

Residue C38 participates in Zn(2+) binding. Residues T40 and H43 each act as charge relay system in the active site. Positions 63, 64, 93, 96, 99, and 107 each coordinate Zn(2+). NAD(+) contacts are provided by residues I175, D195, R200, 262-264 (LGI), and 286-287 (IY).

This sequence belongs to the zinc-containing alcohol dehydrogenase family. In terms of assembly, homotetramer. It depends on Zn(2+) as a cofactor.

The protein localises to the cytoplasm. It catalyses the reaction L-threonine + NAD(+) = (2S)-2-amino-3-oxobutanoate + NADH + H(+). Its pathway is amino-acid degradation; L-threonine degradation via oxydo-reductase pathway; glycine from L-threonine: step 1/2. Its function is as follows. Catalyzes the NAD(+)-dependent oxidation of L-threonine to 2-amino-3-ketobutyrate. The sequence is that of L-threonine 3-dehydrogenase from Chromobacterium violaceum (strain ATCC 12472 / DSM 30191 / JCM 1249 / CCUG 213 / NBRC 12614 / NCIMB 9131 / NCTC 9757 / MK).